Here is a 430-residue protein sequence, read N- to C-terminus: MELLHSINDFNEAKQVIAGGVNSPVRAFKSVKGTPPFILKGKGAYLYDVDNNHYIDFVQSWGPLIFGHADEEIEENIINTLKKGTSFGAPTELETTLAKEIISCYEGLDKVRLVNSGTEATMSAIRLARAYSQKDDLIKFEGCYHGHSDSLLVKAGSGCVTFGSPSSLGVPNDFSKHTLVARYNDLNSTEECFKKGNVGCVIIEPIAGNMGLVPAQKEFLLGLKALCEKYQAVLILDEVMSGFRASLSGSQEFYGVVPDLVTFGKVIGAGLPLACFGGRAEIMDLLSPIGGVYQAGTLSGNPLAVCAGLSALYKIKRDKTLYTRLNALAIRLTQGLKKSAQSYNIALETLNRGSMFGFFFNENAVCDFDDALKSDTEMFAKFHQKMLFKGVYLACSSFETGFICEPMTEEMIDLVVAKADESFDEIIKGV.

The residue at position 265 (K265) is an N6-(pyridoxal phosphate)lysine.

This sequence belongs to the class-III pyridoxal-phosphate-dependent aminotransferase family. HemL subfamily. Homodimer. The cofactor is pyridoxal 5'-phosphate.

Its subcellular location is the cytoplasm. It catalyses the reaction (S)-4-amino-5-oxopentanoate = 5-aminolevulinate. Its pathway is porphyrin-containing compound metabolism; protoporphyrin-IX biosynthesis; 5-aminolevulinate from L-glutamyl-tRNA(Glu): step 2/2. The polypeptide is Glutamate-1-semialdehyde 2,1-aminomutase (Helicobacter pylori (strain HPAG1)).